We begin with the raw amino-acid sequence, 220 residues long: VQ motif-containing protein 5 (220 aa).

Positions 49-57 (FKSLVQQLT) match the VQ motif. 2 disordered regions span residues 61 to 80 (PCDR…PEPI) and 131 to 171 (HMMA…GASS). 2 stretches are compositionally biased toward polar residues: residues 133–150 (MAQS…QSNG) and 157–171 (SWFN…GASS).

The protein localises to the nucleus. Functionally, may function as negative regulator of plant defense. This Arabidopsis thaliana (Mouse-ear cress) protein is VQ motif-containing protein 5.